A 573-amino-acid polypeptide reads, in one-letter code: Protein translocase subunit SecD (573 aa).

Residues 13-33 (YLSVFLVMLIGIYLLVFFTGD) traverse the membrane as a helical segment. The interval 127 to 200 (AQPAAEEPQP…PPAEAPATDP (74 aa)) is disordered. Composition is skewed to pro residues over residues 135–154 (QPAPSAEPQPPGQPAAPPPA) and 161–194 (SPQPGAQPRPYPQDPAPSPNPTSPASPPPAPPAE). Helical transmembrane passes span 385–405 (AGMIAGAIGLLLVLVYSLLYY), 410–430 (LLTALSLVASGSMVFAILVLL), 441–461 (AGIAGLIIGIGTTADSFVVFF), 489–509 (IVSGNAVTFLAAAVLYFLAIG), and 514–534 (FAFTLGLTTILDLVVVFLVTW).

Belongs to the SecD/SecF family. SecD subfamily. As to quaternary structure, forms a complex with SecF. Part of the essential Sec protein translocation apparatus which comprises SecA, SecYEG and auxiliary proteins SecDF. Other proteins may also be involved.

It localises to the cell membrane. Functionally, part of the Sec protein translocase complex. Interacts with the SecYEG preprotein conducting channel. SecDF uses the proton motive force (PMF) to complete protein translocation after the ATP-dependent function of SecA. In Mycobacterium tuberculosis (strain CDC 1551 / Oshkosh), this protein is Protein translocase subunit SecD.